The primary structure comprises 422 residues: Glutamyl-tRNA reductase (422 aa).

Residues 49–52 (TCNR), Ser-108, 113–115 (EPQ), and Gln-119 each bind substrate. Cys-50 (nucleophile) is an active-site residue. An NADP(+)-binding site is contributed by 188–193 (GAGQTI).

This sequence belongs to the glutamyl-tRNA reductase family. As to quaternary structure, homodimer.

The enzyme catalyses (S)-4-amino-5-oxopentanoate + tRNA(Glu) + NADP(+) = L-glutamyl-tRNA(Glu) + NADPH + H(+). It functions in the pathway porphyrin-containing compound metabolism; protoporphyrin-IX biosynthesis; 5-aminolevulinate from L-glutamyl-tRNA(Glu): step 1/2. Catalyzes the NADPH-dependent reduction of glutamyl-tRNA(Glu) to glutamate 1-semialdehyde (GSA). In Marinomonas sp. (strain MWYL1), this protein is Glutamyl-tRNA reductase.